The chain runs to 454 residues: CCA-adding enzyme (454 aa).

Positions 59 and 62 each coordinate ATP. CTP is bound by residues Ser-59 and Arg-62. Positions 71, 73, and 125 each coordinate Mg(2+). Residues His-148, Lys-167, and Tyr-176 each contribute to the ATP site. CTP is bound by residues His-148, Lys-167, and Tyr-176.

Belongs to the tRNA nucleotidyltransferase/poly(A) polymerase family. Archaeal CCA-adding enzyme subfamily. In terms of assembly, homodimer. The cofactor is Mg(2+).

The enzyme catalyses a tRNA precursor + 2 CTP + ATP = a tRNA with a 3' CCA end + 3 diphosphate. It catalyses the reaction a tRNA with a 3' CCA end + 2 CTP + ATP = a tRNA with a 3' CCACCA end + 3 diphosphate. Functionally, catalyzes the addition and repair of the essential 3'-terminal CCA sequence in tRNAs without using a nucleic acid template. Adds these three nucleotides in the order of C, C, and A to the tRNA nucleotide-73, using CTP and ATP as substrates and producing inorganic pyrophosphate. tRNA 3'-terminal CCA addition is required both for tRNA processing and repair. Also involved in tRNA surveillance by mediating tandem CCA addition to generate a CCACCA at the 3' terminus of unstable tRNAs. While stable tRNAs receive only 3'-terminal CCA, unstable tRNAs are marked with CCACCA and rapidly degraded. The protein is CCA-adding enzyme of Methanosarcina barkeri (strain Fusaro / DSM 804).